An 831-amino-acid chain; its full sequence is Probable basic-leucine zipper transcription factor P (831 aa).

Disordered regions lie at residues 1–33 (MNHRIEDITSNPSSPSPNSPFSSPQVSLQPSII) and 54–166 (NITS…IASR). Low complexity predominate over residues 54–85 (NITSSPSTSSSPPISTTTTTTTTTTTTATAKK). Over residues 87-96 (NSKEKKKTTN) the composition is skewed to basic and acidic residues. Residues 97–129 (KDNNNNNNNNNSNNQQQQQQQQQQQQQQQQQQQ) show a composition bias toward low complexity. The stretch at 101 to 141 (NNNNNNNSNNQQQQQQQQQQQQQQQQQQQYEEEDDDEEDEG) forms a coiled coil. Residues 130-143 (YEEEDDDEEDEGGD) are compositionally biased toward acidic residues. Residues 144-154 (DNTKVGKGEKM) are compositionally biased toward basic and acidic residues. The bZIP domain maps to 151–214 (GEKMKARRTN…LELLKFSQEV (64 aa)). Residues 153-173 (KMKARRTNQNIASRNYRQRKK) are basic motif. The leucine-zipper stretch occupies residues 176–183 (IKEMEDKI). 2 stretches are compositionally biased toward low complexity: residues 469–484 (SSSSSSSSSSMSSSTS) and 497–510 (SSSNSSPSSLSASS). Disordered stretches follow at residues 469 to 510 (SSSS…SASS), 658 to 697 (QQQAAQQQSPIQTQLSPPQHITPQHTPQQHIQQQQQHQNY), 715 to 771 (DATN…NTNK), and 787 to 810 (SLFSHQHQQQNSQSPTLPPSQNDS). The stretch at 601-664 (AQQHAQQQAQ…QAAQQQAAQQ (64 aa)) forms a coiled coil. 3 stretches are compositionally biased toward low complexity: residues 674–695 (PPQHITPQHTPQQHIQQQQQHQ), 720–750 (NNNNNNNNNNNNNNNNNNNNNNNNNNNNNNN), and 787–800 (SLFSHQHQQQNSQS).

Belongs to the bZIP family.

It localises to the nucleus. Probable transcriptional regulator. The sequence is that of Probable basic-leucine zipper transcription factor P (bzpP) from Dictyostelium discoideum (Social amoeba).